Reading from the N-terminus, the 237-residue chain is GCN5-related N-acetyltransferase 3, chloroplastic (237 aa).

The N-terminal 93 residues, 1–93, are a transit peptide targeting the chloroplast; it reads MGLVGCVGKS…RAISRSDVIV (93 aa). Residues 94–237 form the N-acetyltransferase domain; the sequence is SVFCKPQHVD…TMMFTKSLEA (144 aa). Residues 171-173, 179-184, 207-209, and phenylalanine 214 contribute to the acetyl-CoA site; these read LMV, RMGIGK, and FED.

This sequence belongs to the acetyltransferase family. GNAT subfamily. As to quaternary structure, oligomer. In terms of processing, autoacetylated. Expressed in green tissues.

It is found in the plastid. The protein resides in the chloroplast. The catalysed reaction is an N-terminal L-alpha-aminoacyl-[protein] + acetyl-CoA = N-terminal N(alpha)-acetyl-L-alpha-aminoacyl-[protein] + CoA + H(+). It carries out the reaction L-lysyl-[protein] + acetyl-CoA = N(6)-acetyl-L-lysyl-[protein] + CoA + H(+). Protein acetyltransferase with dual specificity triggering both N-alpha-acetylation (NTA) and epsilon-lysine acetylation (KA), possibly with a low efficiency or toward specific plastid substrates. The protein is GCN5-related N-acetyltransferase 3, chloroplastic of Arabidopsis thaliana (Mouse-ear cress).